We begin with the raw amino-acid sequence, 361 residues long: Myb/SANT-like DNA-binding domain-containing protein 7 (361 aa).

In terms of domain architecture, Myb-like spans R11–K70. Disordered stretches follow at residues T174 to S198 and R217 to R272. Composition is skewed to polar residues over residues A187–S198 and P226–R249.

This chain is Myb/SANT-like DNA-binding domain-containing protein 7, found in Homo sapiens (Human).